Here is a 360-residue protein sequence, read N- to C-terminus: Acetylxylan esterase / glucomannan deacetylase (360 aa).

An N-terminal signal peptide occupies residues 1–21 (MKPHALIGLLAGMLLSSSLYA). Ser-151 serves as the catalytic Nucleophile.

Belongs to the carbohydrate esterase 2 (CE2) family.

The protein localises to the secreted. It catalyses the reaction Deacetylation of xylans and xylo-oligosaccharides.. The protein operates within glycan degradation; xylan degradation. Its function is as follows. Involved in the degradation of plant cell wall polysaccharides. Catalyzes the deacetylation of acetylated birchwood xylan and glucomannan, with a large preference for the latter, and of the synthetic substrate 4-nitrophenyl acetate (4-NPAc). The polypeptide is Acetylxylan esterase / glucomannan deacetylase (Cellvibrio japonicus (strain Ueda107) (Pseudomonas fluorescens subsp. cellulosa)).